The sequence spans 215 residues: Ras-related protein SEC4 (215 aa).

27-34 (GDSGVGKS) serves as a coordination point for GTP. The Effector region motif lies at 49 to 57 (FITTIGIDF). Residues 75–79 (DTAGQ) and 133–136 (NKSD) contribute to the GTP site. Phosphoserine occurs at positions 201 and 204. 2 S-geranylgeranyl cysteine lipidation sites follow: C214 and C215.

Belongs to the small GTPase superfamily. Rab family. In terms of assembly, interacts with the guanyl-nucleotide exchange factor SEC2. Interacts with SRO7, YIF1, YIP3, YIP4 and YIP5.

The protein resides in the cytoplasmic vesicle. It localises to the secretory vesicle membrane. The protein localises to the cell membrane. It is found in the cytoplasm. Its function is as follows. Involved in exocytosis. Maybe by regulating the binding and fusion of secretory vesicles with the cell surface. The GTP-bound form of SEC4 may interact with an effector, thereby stimulating its activity and leading to exocytotic fusion. SEC4 may be an upstream activator of the 19.5S SEC8/SEC15 particle. SEC4 probably interacts directly with SEC8; it could serve as the attachment site for the SEC8/SEC15 particle. This chain is Ras-related protein SEC4 (SEC4), found in Saccharomyces cerevisiae (strain ATCC 204508 / S288c) (Baker's yeast).